Here is a 433-residue protein sequence, read N- to C-terminus: Adenylosuccinate synthetase (433 aa).

GTP is bound by residues 12-18 and 40-42; these read GDEGKGK and GHT. Asp13 functions as the Proton acceptor in the catalytic mechanism. Mg(2+) contacts are provided by Asp13 and Gly40. IMP-binding positions include 13–16, 38–41, Thr130, Arg144, Gln225, Thr240, and Arg304; these read DEGK and NAGH. His41 (proton donor) is an active-site residue. 300 to 306 contacts substrate; that stretch reads ATTGRPR. GTP-binding positions include Arg306, 332–334, and 414–416; these read KLD and SIG.

It belongs to the adenylosuccinate synthetase family. In terms of assembly, homodimer. Mg(2+) is required as a cofactor.

The protein resides in the cytoplasm. The catalysed reaction is IMP + L-aspartate + GTP = N(6)-(1,2-dicarboxyethyl)-AMP + GDP + phosphate + 2 H(+). It functions in the pathway purine metabolism; AMP biosynthesis via de novo pathway; AMP from IMP: step 1/2. In terms of biological role, plays an important role in the de novo pathway of purine nucleotide biosynthesis. Catalyzes the first committed step in the biosynthesis of AMP from IMP. In Geobacter sulfurreducens (strain ATCC 51573 / DSM 12127 / PCA), this protein is Adenylosuccinate synthetase.